The following is a 553-amino-acid chain: CTP synthase (553 aa).

The interval 1 to 277 (MPTEPETDYD…DQYVMEELDI (277 aa)) is amidoligase domain. A CTP-binding site is contributed by serine 26. Position 26 (serine 26) interacts with UTP. ATP-binding positions include 27 to 32 (GLGKGI) and aspartate 84. Mg(2+) is bound by residues aspartate 84 and glutamate 152. CTP is bound by residues 159 to 161 (DIE), 198 to 203 (KTKPTQ), and lysine 234. Residues 198–203 (KTKPTQ) and lysine 234 contribute to the UTP site. Valine 252 serves as a coordination point for ATP. The region spanning 307-544 (LVGKYDLEDA…LEAVLGDDPH (238 aa)) is the Glutamine amidotransferase type-1 domain. Residue glycine 364 participates in L-glutamine binding. Cysteine 391 serves as the catalytic Nucleophile; for glutamine hydrolysis. L-glutamine is bound by residues 392-395 (LGFQ), glutamate 415, and arginine 472. Residues histidine 517 and glutamate 519 contribute to the active site.

Belongs to the CTP synthase family. In terms of assembly, homotetramer.

The protein resides in the cytoplasm. It catalyses the reaction UTP + L-glutamine + ATP + H2O = CTP + L-glutamate + ADP + phosphate + 2 H(+). The enzyme catalyses L-glutamine + H2O = L-glutamate + NH4(+). It carries out the reaction UTP + NH4(+) + ATP = CTP + ADP + phosphate + 2 H(+). It participates in pyrimidine metabolism; CTP biosynthesis via de novo pathway; CTP from UDP: step 2/2. With respect to regulation, allosterically activated by GTP, when glutamine is the substrate; GTP has no effect on the reaction when ammonia is the substrate. The allosteric effector GTP functions by stabilizing the protein conformation that binds the tetrahedral intermediate(s) formed during glutamine hydrolysis. Inhibited by the product CTP, via allosteric rather than competitive inhibition. Inhibited by 6-diazo-5-oxo-l-norleucine (DON). In terms of biological role, catalyzes the ATP-dependent amination of UTP to CTP with either L-glutamine or ammonia as the source of nitrogen. Regulates intracellular CTP levels through interactions with the four ribonucleotide triphosphates. The chain is CTP synthase from Haloarcula hispanica (strain ATCC 33960 / DSM 4426 / JCM 8911 / NBRC 102182 / NCIMB 2187 / VKM B-1755).